A 144-amino-acid chain; its full sequence is Major allergen Blo t 12 (144 aa).

The N-terminal stretch at 1-20 (MKSVLIFLVAIALFSANIVS) is a signal peptide. The interval 24–77 (QTTRGRHTEPDDHHEKPTTQCTHEETTSTQHHHEEVVTTQTPHHEEKTTTEETH) is disordered. One can recognise a Chitin-binding type-2 domain in the interval 92–144 (HVVCHEEGPIHIQEMCNKYIICSKSGSLWYITVMPCSIGTKFDPISRNCVLDN). Cys-127 and Cys-140 are disulfide-bonded.

In Blomia tropicalis (Mite), this protein is Major allergen Blo t 12.